The chain runs to 1342 residues: DNA-directed RNA polymerase subunit beta (1342 aa).

It belongs to the RNA polymerase beta chain family. The RNAP catalytic core consists of 2 alpha, 1 beta, 1 beta' and 1 omega subunit. When a sigma factor is associated with the core the holoenzyme is formed, which can initiate transcription.

The catalysed reaction is RNA(n) + a ribonucleoside 5'-triphosphate = RNA(n+1) + diphosphate. Functionally, DNA-dependent RNA polymerase catalyzes the transcription of DNA into RNA using the four ribonucleoside triphosphates as substrates. In Salmonella typhi, this protein is DNA-directed RNA polymerase subunit beta.